The following is a 384-amino-acid chain: MKRISILGVTGSIGTQTLDVLRFHKEDFELVGITANRNIELTLDIIKEFSPKYVAINHEESYKKLVDLVKSEGLKCEVIYGMEGLVKVATLDEIDIVVTSVVGMIGLKPTVEAIRKGKDIALANKETLVVAGELVMREAKENGVKILPVDSEHSAIFQSLQGNAHNKIDKILLTASGGPFRGFTIEDLKSVTPERALKHPKWNMGQKISIDSSTLMNKGLEVIEAHWLFDCSYKDIEVVVHPQSIIHSMVQYTDGAVIAQLGVPDMKLPIQYALNYPNREGNISEKLDLFKIRELTFEKPDLDTFKCLKLAYEAGEKGKLMPTILNGANEVCVELFLNKKITYLQIPEIIEECMNTFDYNKEVTLDNVINLDKEVRQYIYEKYN.

Residues Thr-10, Gly-11, Ser-12, Ile-13, Arg-37, Asn-38, and Asn-124 each coordinate NADPH. Lys-125 is a binding site for 1-deoxy-D-xylulose 5-phosphate. Glu-126 provides a ligand contact to NADPH. Asp-150 contributes to the Mn(2+) binding site. 1-deoxy-D-xylulose 5-phosphate is bound by residues Ser-151, Glu-152, Ser-176, and His-199. Glu-152 provides a ligand contact to Mn(2+). Gly-205 is an NADPH binding site. Ser-212, Asn-217, Lys-218, and Glu-221 together coordinate 1-deoxy-D-xylulose 5-phosphate. Glu-221 serves as a coordination point for Mn(2+).

This sequence belongs to the DXR family. Mg(2+) serves as cofactor. Mn(2+) is required as a cofactor.

The enzyme catalyses 2-C-methyl-D-erythritol 4-phosphate + NADP(+) = 1-deoxy-D-xylulose 5-phosphate + NADPH + H(+). It participates in isoprenoid biosynthesis; isopentenyl diphosphate biosynthesis via DXP pathway; isopentenyl diphosphate from 1-deoxy-D-xylulose 5-phosphate: step 1/6. Its function is as follows. Catalyzes the NADPH-dependent rearrangement and reduction of 1-deoxy-D-xylulose-5-phosphate (DXP) to 2-C-methyl-D-erythritol 4-phosphate (MEP). The sequence is that of 1-deoxy-D-xylulose 5-phosphate reductoisomerase from Clostridium perfringens (strain 13 / Type A).